A 1799-amino-acid chain; its full sequence is Bromodomain and WD repeat-containing protein 3 (1799 aa).

8 WD repeats span residues 170-209 (IKMH…IWAT), 213-251 (RLLA…VWCL), 255-297 (APVA…FWQW), 307-347 (RPVK…IYYL), 353-393 (EKIA…IWQY), 400-452 (SIVL…VWNS), 456-495 (QLLH…IWDL), and 502-542 (RNYF…LFGF). S693 carries the post-translational modification Phosphoserine. The interval 766–912 (KKPSYPIQRN…KKKKGGLVSM (147 aa)) is disordered. Over residues 784 to 794 (SLRRTQRKRQH) the composition is skewed to basic residues. The span at 795–816 (TYLTRSNIEHNSQASSQTSGVQ) shows a compositional bias: polar residues. A compositionally biased stretch (acidic residues) spans 817–828 (EDSDSSSEEDET). Low complexity predominate over residues 845–858 (SESSSSDSSSEYSD). The span at 875 to 884 (RQATQKIYSS) shows a compositional bias: polar residues. Residues S884 and S885 each carry the phosphoserine modification. Positions 897–907 (KKPKQTKKKKG) are enriched in basic residues. Residues 1136-1243 (WGAHSRDEEC…DVLLRFIGDQ (108 aa)) enclose the Bromo 1 domain. Disordered regions lie at residues 1258–1291 (EDPD…KCRG), 1321–1366 (EPFR…IDTP), 1435–1482 (IQSQ…QNTS), and 1517–1723 (SPSS…AKRA). Positions 1260–1276 (PDSSDLEEDSEMVDLDS) are enriched in acidic residues. The Bromo 2 domain occupies 1298–1427 (CNPDAWKKQC…ALFENHIKNI (130 aa)). Low complexity predominate over residues 1333 to 1348 (PVQQQQEGESSQSVPP). Residues 1438–1450 (QKRRRPRYRKRLR) show a composition bias toward basic residues. Composition is skewed to low complexity over residues 1451 to 1463 (SSSS…RAPS) and 1517 to 1530 (SPSS…SGNS). 2 positions are modified to phosphoserine: S1574 and S1576. Basic and acidic residues predominate over residues 1584–1596 (GEEKEMKETKEQV). Residues 1598-1623 (LSSSESGELGSSLSSESTSGSDSDSE) show a composition bias toward low complexity. Basic and acidic residues predominate over residues 1624-1640 (STSRTDQDYVDGDHDYS). 2 stretches are compositionally biased toward basic residues: residues 1646 to 1663 (RPKR…RNWK) and 1681 to 1694 (RGGR…RGGR). At S1760 the chain carries Phosphoserine.

In terms of biological role, plays a role in the regulation of cell morphology and cytoskeletal organization. Required in the control of cell shape. The protein is Bromodomain and WD repeat-containing protein 3 (Brwd3) of Mus musculus (Mouse).